Consider the following 226-residue polypeptide: Regulator of microtubule dynamics protein 1 (226 aa).

Belongs to the FAM82/RMD family. As to quaternary structure, interacts with air-2.

It is found in the cytoplasm. It localises to the cytoskeleton. Its subcellular location is the spindle pole. Its function is as follows. Acts in chromosome segregation and organization during mitosis. The protein is Regulator of microtubule dynamics protein 1 (rmd-1) of Caenorhabditis elegans.